We begin with the raw amino-acid sequence, 589 residues long: Oligo-1,6-glucosidase IMA2 (589 aa).

Asp-215 functions as the Nucleophile in the catalytic mechanism. Glu-277 serves as the catalytic Proton donor.

The protein belongs to the glycosyl hydrolase 13 family.

It carries out the reaction Hydrolysis of (1-&gt;6)-alpha-D-glucosidic linkages in some oligosaccharides produced from starch and glycogen by alpha-amylase, and in isomaltose.. Functionally, alpha-glucosidase with specificity for isomaltase, methyl-alpha-glucoside, and palatinose. This chain is Oligo-1,6-glucosidase IMA2 (IMA2), found in Saccharomyces cerevisiae (strain ATCC 204508 / S288c) (Baker's yeast).